Consider the following 87-residue polypeptide: Beta-defensin 109 (87 aa).

A signal peptide spans 1-22 (MRLHLLLLILLLFSILLSPVRG). 3 cysteine pairs are disulfide-bonded: cysteine 31/cysteine 59, cysteine 38/cysteine 53, and cysteine 43/cysteine 60.

The protein belongs to the beta-defensin family.

It localises to the secreted. Its function is as follows. Has antibacterial activity. The chain is Beta-defensin 109 (DEFB109) from Pan troglodytes (Chimpanzee).